Here is a 367-residue protein sequence, read N- to C-terminus: Multifunctional tryptophan biosynthesis protein (367 aa).

The region spanning Asn7–Glu201 is the Glutamine amidotransferase type-1 domain. Gly58–Gly60 contributes to the L-glutamine binding site. Cys86 acts as the Nucleophile; for GATase activity in catalysis. L-glutamine-binding positions include Gln90 and Ser136–Leu137. Active-site for GATase activity residues include His175 and Glu177. The segment at Arg209–Ser367 is indole-3-glycerol phosphate synthase.

Tetramer of two components I and two components II.

It catalyses the reaction chorismate + L-glutamine = anthranilate + pyruvate + L-glutamate + H(+). The catalysed reaction is 1-(2-carboxyphenylamino)-1-deoxy-D-ribulose 5-phosphate + H(+) = (1S,2R)-1-C-(indol-3-yl)glycerol 3-phosphate + CO2 + H2O. Its pathway is amino-acid biosynthesis; L-tryptophan biosynthesis; L-tryptophan from chorismate: step 1/5. It functions in the pathway amino-acid biosynthesis; L-tryptophan biosynthesis; L-tryptophan from chorismate: step 4/5. In Pichia angusta (Yeast), this protein is Multifunctional tryptophan biosynthesis protein.